The sequence spans 207 residues: 8-oxoguanine DNA glycosylase/AP lyase (207 aa).

Active-site residues include Lys128 and Asp146.

It belongs to the type-2 OGG1 family.

It catalyses the reaction 2'-deoxyribonucleotide-(2'-deoxyribose 5'-phosphate)-2'-deoxyribonucleotide-DNA = a 3'-end 2'-deoxyribonucleotide-(2,3-dehydro-2,3-deoxyribose 5'-phosphate)-DNA + a 5'-end 5'-phospho-2'-deoxyribonucleoside-DNA + H(+). Catalyzes the excision of an oxidatively damaged form of guanine (7,8-dihydro-8-oxoguanine = 8-oxoG) from DNA. Also cleaves the DNA backbone at apurinic/apyrimidinic sites (AP sites). The sequence is that of 8-oxoguanine DNA glycosylase/AP lyase from Saccharolobus solfataricus (strain ATCC 35092 / DSM 1617 / JCM 11322 / P2) (Sulfolobus solfataricus).